The primary structure comprises 943 residues: Translation initiation factor IF-2 (943 aa).

Residues 46-359 are disordered; sequence IKGMLSKQSA…MPQRKERPLP (314 aa). Residues 57–76 show a composition bias toward low complexity; the sequence is KAPSSQAAKTPAKAAKTSSA. 2 stretches are compositionally biased toward basic and acidic residues: residues 92–103 and 110–124; these read SNDHADVAEHSQ and AKQE…KTSD. Polar residues predominate over residues 130 to 141; sequence SKSTILRPRSTQ. Residues 142–190 are compositionally biased toward low complexity; the sequence is TAHTNTNHNRGGNTASANNTANGRNSNRSNNNNNNRSANNANRSGNNNR. 3 stretches are compositionally biased toward basic and acidic residues: residues 191–205, 239–250, and 259–271; these read SNER…RFDN, ASERQQPKRQEA, and KRSE…RPRT. Low complexity-rich tracts occupy residues 289–299 and 315–330; these read PAAAAPKPASA and NFGR…GFNR. Residues 331 to 342 are compositionally biased toward basic residues; that stretch reads NNRRNKKNKRRQ. The span at 346–358 shows a compositional bias: basic and acidic residues; the sequence is PKKEMPQRKERPL. One can recognise a tr-type G domain in the interval 444-613; the sequence is PRPPVVTIMG…LLEADVLELK (170 aa). The G1 stretch occupies residues 453–460; the sequence is GHVDHGKT. GTP is bound at residue 453 to 460; it reads GHVDHGKT. The segment at 478–482 is G2; it reads GITQH. The tract at residues 499–502 is G3; the sequence is DTPG. GTP is bound by residues 499–503 and 553–556; these read DTPGH and NKID. Positions 553–556 are G4; sequence NKID. Residues 589 to 591 form a G5 region; it reads SAK.

The protein belongs to the TRAFAC class translation factor GTPase superfamily. Classic translation factor GTPase family. IF-2 subfamily.

It is found in the cytoplasm. Its function is as follows. One of the essential components for the initiation of protein synthesis. Protects formylmethionyl-tRNA from spontaneous hydrolysis and promotes its binding to the 30S ribosomal subunits. Also involved in the hydrolysis of GTP during the formation of the 70S ribosomal complex. The protein is Translation initiation factor IF-2 of Lacticaseibacillus casei (strain BL23) (Lactobacillus casei).